A 331-amino-acid polypeptide reads, in one-letter code: tRNA uridine(34) hydroxylase (331 aa).

Residues 122-218 (KENRCLVLDV…YGQAVGTGKW (97 aa)) enclose the Rhodanese domain. Residue cysteine 178 is the Cysteine persulfide intermediate of the active site.

It belongs to the TrhO family.

It catalyses the reaction uridine(34) in tRNA + AH2 + O2 = 5-hydroxyuridine(34) in tRNA + A + H2O. Its function is as follows. Catalyzes oxygen-dependent 5-hydroxyuridine (ho5U) modification at position 34 in tRNAs. In Chlamydia caviae (strain ATCC VR-813 / DSM 19441 / 03DC25 / GPIC) (Chlamydophila caviae), this protein is tRNA uridine(34) hydroxylase.